Reading from the N-terminus, the 231-residue chain is Class A basic helix-loop-helix protein 9 (231 aa).

Positions 61–113 constitute a bHLH domain; sequence ARRMAANVRERKRILDYNEAFNALRRALQHDLGGKRLSKIATLRRAIHRITAL. Residues 135–168 form a disordered region; sequence QAAQGSSTGNSSFSVPRSAPSPIAPSLTRRDIAS. Residues 137–149 show a composition bias toward polar residues; sequence AQGSSTGNSSFSV.

Heterodimer. Efficient DNA binding requires dimerization with another bHLH protein. Interacts with TCF3, TCF4, and TCF12.

It localises to the nucleus. In terms of biological role, transcription factor, which play a role in limb development. Is an essential player in the regulatory network governing transcription of genes implicated in limb morphogenesis. The polypeptide is Class A basic helix-loop-helix protein 9 (Bhlha9) (Mus musculus (Mouse)).